A 596-amino-acid polypeptide reads, in one-letter code: Potassium-transporting ATPase potassium-binding subunit (596 aa).

The next 10 membrane-spanning stretches (helical) occupy residues 6–26 (ILTI…LGGF), 67–87 (AIGL…LQLF), 136–156 (GLTT…IALI), 177–197 (ITLY…VGQG), 283–303 (LSNF…CFTF), 314–334 (WVVL…AVHF), 413–433 (GLYG…LMIG), 450–470 (MVAI…AIAV), 518–538 (MLAI…LALA), and 560–580 (LFIV…YVPA).

The protein belongs to the KdpA family. In terms of assembly, the system is composed of three essential subunits: KdpA, KdpB and KdpC.

The protein resides in the cell inner membrane. In terms of biological role, part of the high-affinity ATP-driven potassium transport (or Kdp) system, which catalyzes the hydrolysis of ATP coupled with the electrogenic transport of potassium into the cytoplasm. This subunit binds the periplasmic potassium ions and delivers the ions to the membrane domain of KdpB through an intramembrane tunnel. The sequence is that of Potassium-transporting ATPase potassium-binding subunit from Polynucleobacter asymbioticus (strain DSM 18221 / CIP 109841 / QLW-P1DMWA-1) (Polynucleobacter necessarius subsp. asymbioticus).